The chain runs to 218 residues: Large ribosomal subunit protein uL3 (218 aa).

Positions glycine 127–glycine 167 are disordered.

It belongs to the universal ribosomal protein uL3 family. Part of the 50S ribosomal subunit. Forms a cluster with proteins L14 and L19.

One of the primary rRNA binding proteins, it binds directly near the 3'-end of the 23S rRNA, where it nucleates assembly of the 50S subunit. This is Large ribosomal subunit protein uL3 from Prochlorococcus marinus (strain MIT 9303).